Here is a 449-residue protein sequence, read N- to C-terminus: Trigger factor (449 aa).

One can recognise a PPIase FKBP-type domain in the interval threonine 160–glutamine 231. The segment at glycine 411–glutamate 449 is disordered. Over residues alanine 415–alanine 443 the composition is skewed to low complexity.

It belongs to the FKBP-type PPIase family. Tig subfamily.

The protein resides in the cytoplasm. It carries out the reaction [protein]-peptidylproline (omega=180) = [protein]-peptidylproline (omega=0). In terms of biological role, involved in protein export. Acts as a chaperone by maintaining the newly synthesized protein in an open conformation. Functions as a peptidyl-prolyl cis-trans isomerase. The sequence is that of Trigger factor from Deinococcus geothermalis (strain DSM 11300 / CIP 105573 / AG-3a).